We begin with the raw amino-acid sequence, 127 residues long: Large ribosomal subunit protein bL12 (127 aa).

Belongs to the bacterial ribosomal protein bL12 family. Homodimer. Part of the ribosomal stalk of the 50S ribosomal subunit. Forms a multimeric L10(L12)X complex, where L10 forms an elongated spine to which 2 to 4 L12 dimers bind in a sequential fashion. Binds GTP-bound translation factors.

In terms of biological role, forms part of the ribosomal stalk which helps the ribosome interact with GTP-bound translation factors. Is thus essential for accurate translation. This Phytoplasma mali (strain AT) protein is Large ribosomal subunit protein bL12.